The sequence spans 153 residues: UPF0260 protein YcgN (153 aa).

The protein belongs to the UPF0260 family.

In Salmonella agona (strain SL483), this protein is UPF0260 protein YcgN.